Here is a 149-residue protein sequence, read N- to C-terminus: 3-dehydroquinate dehydratase (149 aa).

Tyrosine 22 functions as the Proton acceptor in the catalytic mechanism. Positions 73, 79, and 86 each coordinate substrate. Histidine 99 (proton donor) is an active-site residue. Residues 100–101 and arginine 110 contribute to the substrate site; that span reads LS.

It belongs to the type-II 3-dehydroquinase family. Homododecamer.

It carries out the reaction 3-dehydroquinate = 3-dehydroshikimate + H2O. It functions in the pathway metabolic intermediate biosynthesis; chorismate biosynthesis; chorismate from D-erythrose 4-phosphate and phosphoenolpyruvate: step 3/7. Functionally, catalyzes a trans-dehydration via an enolate intermediate. The chain is 3-dehydroquinate dehydratase from Prochlorococcus marinus (strain MIT 9313).